The following is a 603-amino-acid chain: Sesquiterpene synthase Cad (603 aa).

Over residues 1 to 13 (MAEVGLSQNSYAS) the composition is skewed to polar residues. The segment at 1–23 (MAEVGLSQNSYASANHDKKSEQQ) is disordered. Positions 357, 361, 498, and 506 each coordinate Mg(2+). The short motif at 357–361 (DDIFD) is the DDXXD motif element.

This sequence belongs to the terpene synthase family. Tpsa subfamily. Requires Mg(2+) as cofactor. Mn(2+) is required as a cofactor. Mostly expressed in leaves and, to a lower extent, in stems and xylem.

It catalyses the reaction (2E,6E)-farnesyl diphosphate = beta-cadinene + diphosphate. It participates in secondary metabolite biosynthesis; terpenoid biosynthesis. Functionally, sesquiterpene synthase involved in the biosynthesis of volatile compounds. Mediates the conversion of (2E,6E)-farnesyl diphosphate (FPP) into beta-cadinene. Not active with geranyl diphosphate (GPP) and geranylgeranyl diphosphate (GGPP) as substrates. This is Sesquiterpene synthase Cad from Chamaecyparis formosensis (Formosan cypress).